Here is a 908-residue protein sequence, read N- to C-terminus: Metabotropic glutamate receptor 8 (908 aa).

Residues 1-33 (MVCEGKRSASCPCFFLLTAKFYWILTMMQRTHS) form the signal peptide. Residues 34–583 (QEYAHSIRVD…IIKLEWHSPW (550 aa)) are Extracellular-facing. C64 and C106 form a disulfide bridge. N95 carries an N-linked (GlcNAc...) asparagine glycan. L-glutamate contacts are provided by residues S156, 177–179 (AST), and Y227. Intrachain disulfides connect C246–C534, C369–C384, C424–C431, C516–C535, C520–C538, C541–C553, and C556–C569. N-linked (GlcNAc...) asparagine glycosylation is present at N298. D309 lines the L-glutamate pocket. Residue K401 coordinates L-glutamate. N452 and N480 each carry an N-linked (GlcNAc...) asparagine glycan. The N-linked (GlcNAc...) asparagine glycan is linked to N565. The chain crosses the membrane as a helical span at residues 584 to 608 (AVVPVFVAILGIIATTFVIVTFVRY). Over 609-620 (NDTPIVRASGRE) the chain is Cytoplasmic. A helical transmembrane segment spans residues 621 to 641 (LSYVLLTGIFLCYSITFLMIA). At 642–647 (APDTII) the chain is on the extracellular side. The helical transmembrane segment at 648–668 (CSFRRVFLGLGMCFSYAALLT) threads the bilayer. The Cytoplasmic portion of the chain corresponds to 669–695 (KTNRIHRIFEQGKKSVTAPKFISPASQ). The chain crosses the membrane as a helical span at residues 696–716 (LVITFSLISVQLLGVFVWFVV). The Extracellular portion of the chain corresponds to 717 to 746 (DPPHIIIDYGEQRTLDPEKARGVLKCDISD). A helical transmembrane segment spans residues 747–768 (LSLICSLGYSILLMVTCTVYAI). The Cytoplasmic segment spans residues 769–781 (KTRGVPETFNEAK). A helical transmembrane segment spans residues 782 to 803 (PIGFTMYTTCIIWLAFIPIFFG). Topologically, residues 804–818 (TAQSAEKMYIQTTTL) are extracellular. The chain crosses the membrane as a helical span at residues 819–843 (TVSMSLSASVSLGMLYMPKVYIIIF). Residues 844–908 (HPEQNVQKRK…TYISYSNHSI (65 aa)) are Cytoplasmic-facing. Residue K882 forms a Glycyl lysine isopeptide (Lys-Gly) (interchain with G-Cter in SUMO1) linkage.

This sequence belongs to the G-protein coupled receptor 3 family. Interacts with PICK1.

It localises to the cell membrane. In terms of biological role, G-protein coupled receptor for glutamate. Ligand binding causes a conformation change that triggers signaling via guanine nucleotide-binding proteins (G proteins) and modulates the activity of down-stream effectors, such as adenylate cyclase. Signaling inhibits adenylate cyclase activity. In Homo sapiens (Human), this protein is Metabotropic glutamate receptor 8 (GRM8).